A 37-amino-acid chain; its full sequence is Chitinase-like protein (37 aa).

The tract at residues 1 to 20 (VLLSVGGDADTESPEKKNLG) is disordered. A GH18 domain is found at 1–37 (VLLSVGGDADTESPEKKNLGGVSIVDLSMDDFRGLLT).

The protein belongs to the glycosyl hydrolase 18 family. IDGF subfamily. Post-translationally, glycosylated.

The protein resides in the secreted. Functionally, cooperates with insulin-like peptides to stimulate the proliferation, polarization and motility of imaginal disk cells. May act by stabilizing the binding of insulin-like peptides to its receptor through a simultaneous interaction with both molecules to form a multiprotein signaling complex. This is Chitinase-like protein from Heliothis virescens (Tobacco budworm moth).